Reading from the N-terminus, the 172-residue chain is Crossover junction endodeoxyribonuclease RuvC (172 aa).

Active-site residues include Asp7, Glu68, and Asp141. Mg(2+) is bound by residues Asp7, Glu68, and Asp141.

This sequence belongs to the RuvC family. Homodimer which binds Holliday junction (HJ) DNA. The HJ becomes 2-fold symmetrical on binding to RuvC with unstacked arms; it has a different conformation from HJ DNA in complex with RuvA. In the full resolvosome a probable DNA-RuvA(4)-RuvB(12)-RuvC(2) complex forms which resolves the HJ. It depends on Mg(2+) as a cofactor.

It localises to the cytoplasm. The enzyme catalyses Endonucleolytic cleavage at a junction such as a reciprocal single-stranded crossover between two homologous DNA duplexes (Holliday junction).. In terms of biological role, the RuvA-RuvB-RuvC complex processes Holliday junction (HJ) DNA during genetic recombination and DNA repair. Endonuclease that resolves HJ intermediates. Cleaves cruciform DNA by making single-stranded nicks across the HJ at symmetrical positions within the homologous arms, yielding a 5'-phosphate and a 3'-hydroxyl group; requires a central core of homology in the junction. The consensus cleavage sequence is 5'-(A/T)TT(C/G)-3'. Cleavage occurs on the 3'-side of the TT dinucleotide at the point of strand exchange. HJ branch migration catalyzed by RuvA-RuvB allows RuvC to scan DNA until it finds its consensus sequence, where it cleaves and resolves the cruciform DNA. This is Crossover junction endodeoxyribonuclease RuvC from Frankia casuarinae (strain DSM 45818 / CECT 9043 / HFP020203 / CcI3).